The primary structure comprises 376 residues: Queuine tRNA-ribosyltransferase (376 aa).

Residue Asp-93 is the Proton acceptor of the active site. Residues 93–97 (DSGGF), Asp-147, Gln-191, and Gly-218 each bind substrate. An RNA binding region spans residues 249–255 (GVGKPED). The active-site Nucleophile is Asp-268. The tract at residues 273–277 (TRNAR) is RNA binding; important for wobble base 34 recognition. Positions 306, 308, 311, and 337 each coordinate Zn(2+).

Belongs to the queuine tRNA-ribosyltransferase family. As to quaternary structure, homodimer. Within each dimer, one monomer is responsible for RNA recognition and catalysis, while the other monomer binds to the replacement base PreQ1. Requires Zn(2+) as cofactor.

The catalysed reaction is 7-aminomethyl-7-carbaguanine + guanosine(34) in tRNA = 7-aminomethyl-7-carbaguanosine(34) in tRNA + guanine. Its pathway is tRNA modification; tRNA-queuosine biosynthesis. Catalyzes the base-exchange of a guanine (G) residue with the queuine precursor 7-aminomethyl-7-deazaguanine (PreQ1) at position 34 (anticodon wobble position) in tRNAs with GU(N) anticodons (tRNA-Asp, -Asn, -His and -Tyr). Catalysis occurs through a double-displacement mechanism. The nucleophile active site attacks the C1' of nucleotide 34 to detach the guanine base from the RNA, forming a covalent enzyme-RNA intermediate. The proton acceptor active site deprotonates the incoming PreQ1, allowing a nucleophilic attack on the C1' of the ribose to form the product. After dissociation, two additional enzymatic reactions on the tRNA convert PreQ1 to queuine (Q), resulting in the hypermodified nucleoside queuosine (7-(((4,5-cis-dihydroxy-2-cyclopenten-1-yl)amino)methyl)-7-deazaguanosine). This is Queuine tRNA-ribosyltransferase from Histophilus somni (strain 129Pt) (Haemophilus somnus).